The sequence spans 286 residues: Ribonuclease H1 (286 aa).

The segment covering 101 to 115 (EPLDGDGHESAEPYA) has biased composition (basic and acidic residues). The segment at 101–127 (EPLDGDGHESAEPYAKHMKPSVEPAPP) is disordered. In terms of domain architecture, RNase H type-1 spans 136 to 282 (MGDFVVVYTD…ADRLAREGAK (147 aa)). The Mg(2+) site is built by Asp145, Glu186, Asp210, and Asp274.

Belongs to the RNase H family. In terms of assembly, monomer. It depends on Mg(2+) as a cofactor. Ubiquitous.

The protein resides in the cytoplasm. It catalyses the reaction Endonucleolytic cleavage to 5'-phosphomonoester.. Its activity is regulated as follows. In the presence of magnesium, manganese is inhibitory. Its function is as follows. Endonuclease that specifically degrades the RNA of RNA-DNA hybrids. Plays a role in RNA polymerase II (RNAp II) transcription termination by degrading R-loop RNA-DNA hybrid formation at G-rich pause sites located downstream of the poly(A) site and behind the elongating RNAp II. This is Ribonuclease H1 (RNASEH1) from Homo sapiens (Human).